Here is a 388-residue protein sequence, read N- to C-terminus: Succinyl-diaminopimelate desuccinylase (388 aa).

Residue H71 participates in Zn(2+) binding. Residue D73 is part of the active site. Zn(2+) is bound at residue D104. E143 functions as the Proton acceptor in the catalytic mechanism. Zn(2+)-binding residues include E144, E172, and H361.

It belongs to the peptidase M20A family. DapE subfamily. Homodimer. Zn(2+) is required as a cofactor. The cofactor is Co(2+).

The catalysed reaction is N-succinyl-(2S,6S)-2,6-diaminopimelate + H2O = (2S,6S)-2,6-diaminopimelate + succinate. It functions in the pathway amino-acid biosynthesis; L-lysine biosynthesis via DAP pathway; LL-2,6-diaminopimelate from (S)-tetrahydrodipicolinate (succinylase route): step 3/3. Functionally, catalyzes the hydrolysis of N-succinyl-L,L-diaminopimelic acid (SDAP), forming succinate and LL-2,6-diaminopimelate (DAP), an intermediate involved in the bacterial biosynthesis of lysine and meso-diaminopimelic acid, an essential component of bacterial cell walls. This is Succinyl-diaminopimelate desuccinylase from Bradyrhizobium diazoefficiens (strain JCM 10833 / BCRC 13528 / IAM 13628 / NBRC 14792 / USDA 110).